The primary structure comprises 664 residues: DNA primase (664 aa).

The CHC2-type zinc finger occupies 40 to 64; it reads CPFHKEKTPSFTVSPDKQFYYCFGC. Over residues 94–104 the composition is skewed to basic and acidic residues; the sequence is GMDVPREERGG. A disordered region spans residues 94–115; sequence GMDVPREERGGRGHTPRQPTDS. Residues 262–344 form the Toprim domain; the sequence is DEIMVVEGYM…GKRVRFLFLP (83 aa). The Mg(2+) site is built by Glu268, Asp312, and Asp314. Residues 483–521 are disordered; the sequence is PRKSWNKDKKPWDGKKWDGKKKWDKGGRGDFKAPQRTPV. Over residues 487-515 the composition is skewed to basic and acidic residues; the sequence is WNKDKKPWDGKKWDGKKKWDKGGRGDFKA.

The protein belongs to the DnaG primase family. Monomer. Interacts with DnaB. Zn(2+) is required as a cofactor. It depends on Mg(2+) as a cofactor.

It catalyses the reaction ssDNA + n NTP = ssDNA/pppN(pN)n-1 hybrid + (n-1) diphosphate.. Its function is as follows. RNA polymerase that catalyzes the synthesis of short RNA molecules used as primers for DNA polymerase during DNA replication. This chain is DNA primase, found in Pseudomonas aeruginosa (strain ATCC 15692 / DSM 22644 / CIP 104116 / JCM 14847 / LMG 12228 / 1C / PRS 101 / PAO1).